Reading from the N-terminus, the 289-residue chain is Probable ABC transporter permease protein BruAb2_0483 (289 aa).

6 consecutive transmembrane segments (helical) span residues Phe-9 to Leu-29, Val-70 to Leu-90, Val-99 to Trp-119, Ile-144 to Val-166, Ile-213 to Thr-233, and Phe-258 to Ile-278. One can recognise an ABC transmembrane type-1 domain in the interval Leu-65–Tyr-279.

The protein belongs to the binding-protein-dependent transport system permease family. In terms of assembly, the complex is composed of two ATP-binding proteins (BruAb2_0487), two transmembrane proteins (BruAb2_0483) and a solute-binding protein (BruAb2_0484).

It localises to the cell inner membrane. Its function is as follows. Probably part of an ABC transporter complex. Probably responsible for the translocation of the substrate across the membrane. This chain is Probable ABC transporter permease protein BruAb2_0483, found in Brucella abortus biovar 1 (strain 9-941).